We begin with the raw amino-acid sequence, 836 residues long: Granulocyte colony-stimulating factor receptor (836 aa).

The first 24 residues, 1-24, serve as a signal peptide directing secretion; sequence MARLGNCSLTWAALIILLLPGSLE. Positions 25 to 117 constitute an Ig-like C2-type domain; that stretch reads ECGHISVSAP…SLQILDQVEL (93 aa). Residues 25-627 are Extracellular-facing; it reads ECGHISVSAP…TLTPEGSELH (603 aa). Cystine bridges form between C26–C52 and C46–C101. 4 N-linked (GlcNAc...) asparagine glycosylation sites follow: N51, N93, N128, and N134. 5 Fibronectin type-III domains span residues 125–230, 233–332, 334–430, 431–528, and 530–623; these read IPHN…LEPP, RTMD…TTER, PTVR…SRGP, ALTR…MAPS, and APEL…TPEG. Intrachain disulfides connect C131–C142, C167–C218, C177–C186, C248–C295, and C266–C309. Positions 318–322 match the WSXWS motif motif; it reads WSDWS. 4 N-linked (GlcNAc...) asparagine glycosylation sites follow: N389, N474, N579, and N610. The helical transmembrane segment at 628–650 threads the bilayer; it reads IILGLFGLLLLLTCLCGTAWLCC. Residues 651–836 are Cytoplasmic-facing; the sequence is SPNRKNPLWP…VHGMEALGSF (186 aa). Positions 658–666 match the Box 1 motif motif; sequence LWPSVPDPA.

This sequence belongs to the type I cytokine receptor family. Type 2 subfamily. Homodimer. The dimeric receptor binds two CSF3 molecules. Interacts with CEACAM1; down-regulates the CSF3R-STAT3 pathway through recruitment of PTPN6 that dephosphorylates CSF3R. In terms of processing, N-glycosylated. In terms of tissue distribution, one or several isoforms have been found in myelogenous leukemia cell line KG-1, leukemia U-937 cell line, in bone marrow cells, placenta, and peripheral blood granulocytes. Isoform GCSFR-2 is found only in leukemia U-937 cells. Isoform GCSFR-3 is highly expressed in placenta.

The protein localises to the secreted. It localises to the cell membrane. Receptor for granulocyte colony-stimulating factor (CSF3), essential for granulocytic maturation. Plays a crucial role in the proliferation, differentiation and survival of cells along the neutrophilic lineage. In addition it may function in some adhesion or recognition events at the cell surface. The protein is Granulocyte colony-stimulating factor receptor (CSF3R) of Homo sapiens (Human).